The primary structure comprises 209 residues: MSKNKVSASSGRWLKEHFDDKYVLEAQKRGYRSRAIFKIEEIQNKDKLLKSGMTVVDLGAAPGGWSQYAVEQVGDEGQVIACDILPMDSIAGVSFLQGDFREEAVLDALLERIQPDMVDVVMSDMAPNMSGNLAVDQPRAMYLVELALDMCRQVLAPNGSFTVKVFQGEGFDQYLQEVRNMFKVVKIRKPDSSRARSREVYIVATGYKG.

The S-adenosyl-L-methionine site is built by Gly-63, Trp-65, Asp-83, Asp-99, and Asp-124. Catalysis depends on Lys-164, which acts as the Proton acceptor.

Belongs to the class I-like SAM-binding methyltransferase superfamily. RNA methyltransferase RlmE family.

It localises to the cytoplasm. It catalyses the reaction uridine(2552) in 23S rRNA + S-adenosyl-L-methionine = 2'-O-methyluridine(2552) in 23S rRNA + S-adenosyl-L-homocysteine + H(+). In terms of biological role, specifically methylates the uridine in position 2552 of 23S rRNA at the 2'-O position of the ribose in the fully assembled 50S ribosomal subunit. The protein is Ribosomal RNA large subunit methyltransferase E of Aliivibrio fischeri (strain MJ11) (Vibrio fischeri).